A 597-amino-acid polypeptide reads, in one-letter code: Kelch-like protein 21 (597 aa).

The BTB domain maps to 35 to 103 (LDVTLEAAGG…SYTGRVAVSG (69 aa)). In terms of domain architecture, BACK spans 138 to 239 (CLDMQDFAEA…RRFYLLAHVE (102 aa)). Kelch repeat units lie at residues 287 to 335 (ILVL…ALGN), 336 to 382 (DIYV…VLDG), 384 to 422 (LYVV…ACRG), 423 to 470 (RLYA…TLNG), 472 to 512 (MYFV…VLGG), and 513 to 560 (KLYV…SIFR). Positions 570-597 (GRGFELDSGSDDMDPGRPRPPRDPDELH) are disordered. Over residues 583 to 597 (DPGRPRPPRDPDELH) the composition is skewed to basic and acidic residues.

Component of the BCR(KLHL21) E3 ubiquitin ligase complex, at least composed of CUL3, KLHL21 and RBX1.

It is found in the cytoplasm. Its subcellular location is the cytoskeleton. It localises to the spindle. It participates in protein modification; protein ubiquitination. Substrate-specific adapter of a BCR (BTB-CUL3-RBX1) E3 ubiquitin-protein ligase complex required for efficient chromosome alignment and cytokinesis. The BCR(KLHL21) E3 ubiquitin ligase complex regulates localization of the chromosomal passenger complex (CPC) from chromosomes to the spindle midzone in anaphase and mediates the ubiquitination of AURKB. Ubiquitination of AURKB by BCR(KLHL21) E3 ubiquitin ligase complex may not lead to its degradation by the proteasome. This Homo sapiens (Human) protein is Kelch-like protein 21 (KLHL21).